The following is a 224-amino-acid chain: Pyridoxal 5'-phosphate synthase subunit SNO1 (224 aa).

67-69 (GES) lines the L-glutamine pocket. The active-site Nucleophile is C100. L-glutamine-binding positions include R129 and 160 to 161 (IR). Catalysis depends on charge relay system residues H203 and E205.

Belongs to the glutaminase PdxT/SNO family.

The enzyme catalyses aldehydo-D-ribose 5-phosphate + D-glyceraldehyde 3-phosphate + L-glutamine = pyridoxal 5'-phosphate + L-glutamate + phosphate + 3 H2O + H(+). It carries out the reaction L-glutamine + H2O = L-glutamate + NH4(+). It participates in cofactor biosynthesis; pyridoxal 5'-phosphate biosynthesis. Its function is as follows. Catalyzes the hydrolysis of glutamine to glutamate and ammonia as part of the biosynthesis of pyridoxal 5'-phosphate. The resulting ammonia molecule is channeled to the active site of a SNZ isoform. The protein is Pyridoxal 5'-phosphate synthase subunit SNO1 (SNO1) of Saccharomyces cerevisiae (strain ATCC 204508 / S288c) (Baker's yeast).